Here is a 219-residue protein sequence, read N- to C-terminus: Large ribosomal subunit protein uL16y (219 aa).

The protein belongs to the universal ribosomal protein uL16 family. In terms of assembly, component of the small ribosomal subunit. Mature ribosomes consist of a small (40S) and a large (60S) subunit. The 40S subunit contains about 33 different proteins and 1 molecule of RNA (18S). The 60S subunit contains about 49 different proteins and 3 molecules of RNA (25S, 5.8S and 5S).

This Oryza sativa subsp. japonica (Rice) protein is Large ribosomal subunit protein uL16y (SG12).